We begin with the raw amino-acid sequence, 202 residues long: Small ribosomal subunit protein bS20c (202 aa).

A chloroplast-targeting transit peptide spans M1 to E79. The segment at S89–E110 is disordered.

The protein belongs to the bacterial ribosomal protein bS20 family. In terms of assembly, part of the 30S ribosomal subunit.

The protein localises to the plastid. Its subcellular location is the chloroplast. Binds directly to 16S ribosomal RNA. This is Small ribosomal subunit protein bS20c (RPS20) from Arabidopsis thaliana (Mouse-ear cress).